Here is a 265-residue protein sequence, read N- to C-terminus: Putative hydro-lyase PA2116 (265 aa).

The protein belongs to the D-glutamate cyclase family.

This chain is Putative hydro-lyase PA2116, found in Pseudomonas aeruginosa (strain ATCC 15692 / DSM 22644 / CIP 104116 / JCM 14847 / LMG 12228 / 1C / PRS 101 / PAO1).